The primary structure comprises 75 residues: Small ribosomal subunit protein bS18 (75 aa).

Belongs to the bacterial ribosomal protein bS18 family. Part of the 30S ribosomal subunit. Forms a tight heterodimer with protein bS6.

Functionally, binds as a heterodimer with protein bS6 to the central domain of the 16S rRNA, where it helps stabilize the platform of the 30S subunit. The sequence is that of Small ribosomal subunit protein bS18 from Yersinia enterocolitica serotype O:8 / biotype 1B (strain NCTC 13174 / 8081).